Reading from the N-terminus, the 694-residue chain is Scarecrow-like protein 33 (694 aa).

Positions 289–313 are disordered; the sequence is PAKASTFSKSPKGEKPEASGNSYTK. The region spanning 309 to 692 is the GRAS domain; it reads NSYTKETPDL…RIVYGSSIWV (384 aa). The interval 316–376 is leucine repeat I (LRI); it reads PDLRTMLVSC…EARLAGIGTQ (61 aa). The interval 395–462 is VHIID; the sequence is YQTYISVCPF…GSSCKLRITG (68 aa). Residues 428–432 carry the VHIID motif; it reads IHIID. Residues 478 to 510 form a leucine repeat II (LRII) region; the sequence is ETGRRLAKYCQKFNIPFEYNAIAQKWESIKLED. The segment at 519–613 is PFYRE; the sequence is VAVNSLFRFR…KEFYGREIMN (95 aa). The SAW stretch occupies residues 616 to 692; sequence ACEGTERVER…RIVYGSSIWV (77 aa).

The protein belongs to the GRAS family. Interacts with SNRNP35.

It localises to the nucleus. Probable transcription factor involved in plant development. In Arabidopsis thaliana (Mouse-ear cress), this protein is Scarecrow-like protein 33 (SCL33).